The chain runs to 113 residues: Nucleoid-associated protein FMG_0513 (113 aa).

Residues 1 to 44 (MGNKFRGGMPGMGNMGNMMKQMQKMQRQMEETQKRLEETEVTAT) form a disordered region. Residues 15–26 (MGNMMKQMQKMQ) are compositionally biased toward low complexity. Residues 27–38 (RQMEETQKRLEE) are compositionally biased toward basic and acidic residues.

It belongs to the YbaB/EbfC family. In terms of assembly, homodimer.

The protein resides in the cytoplasm. The protein localises to the nucleoid. In terms of biological role, binds to DNA and alters its conformation. May be involved in regulation of gene expression, nucleoid organization and DNA protection. The protein is Nucleoid-associated protein FMG_0513 of Finegoldia magna (strain ATCC 29328 / DSM 20472 / WAL 2508) (Peptostreptococcus magnus).